Consider the following 809-residue polypeptide: Valine--tRNA ligase (809 aa).

The short motif at 60–70 (PFTSGELHMGH) is the 'HIGH' region element. Positions 546–550 (RMSKS) match the 'KMSKS' region motif. K549 contributes to the ATP binding site.

Belongs to the class-I aminoacyl-tRNA synthetase family. ValS type 2 subfamily.

It is found in the cytoplasm. The catalysed reaction is tRNA(Val) + L-valine + ATP = L-valyl-tRNA(Val) + AMP + diphosphate. In terms of biological role, catalyzes the attachment of valine to tRNA(Val). As ValRS can inadvertently accommodate and process structurally similar amino acids such as threonine, to avoid such errors, it has a 'posttransfer' editing activity that hydrolyzes mischarged Thr-tRNA(Val) in a tRNA-dependent manner. This chain is Valine--tRNA ligase, found in Sulfurisphaera tokodaii (strain DSM 16993 / JCM 10545 / NBRC 100140 / 7) (Sulfolobus tokodaii).